A 374-amino-acid polypeptide reads, in one-letter code: Putative 2,3-diketo-5-methylthiopentyl-1-phosphate enolase (374 aa).

Substrate-binding positions include K138, 164 to 167, H255, G327, and 349 to 350; these read QDDE and GG. D166 serves as a coordination point for Mg(2+).

This sequence belongs to the RuBisCO large chain family. Type IV subfamily. Homodimer. Requires Mg(2+) as cofactor.

The enzyme catalyses 5-methylsulfanyl-2,3-dioxopentyl phosphate = 2-hydroxy-5-methylsulfanyl-3-oxopent-1-enyl phosphate. It functions in the pathway amino-acid biosynthesis; L-methionine biosynthesis via salvage pathway; L-methionine from S-methyl-5-thio-alpha-D-ribose 1-phosphate: step 3/6. Functionally, catalyzes the enolization of 2,3-diketo-5-methylthiopentyl-1-phosphate (DK-MTP-1-P) into 2-hydroxy-3-keto-5-methylthiopentenyl-1-phosphate (HK-MTPenyl-1-P). This is Putative 2,3-diketo-5-methylthiopentyl-1-phosphate enolase (mtnW) from Shouchella clausii (strain KSM-K16) (Alkalihalobacillus clausii).